A 464-amino-acid polypeptide reads, in one-letter code: Armadillo repeat-containing protein 6 homolog (464 aa).

Phosphothreonine is present on T9. ARM repeat units lie at residues 235–275, 287–331, 332–374, and 375–418; these read AHEH…TLAV, GGLK…QQGV, APII…FDTG, and IAEV…ISFG.

The protein belongs to the ARMC6 family.

This is Armadillo repeat-containing protein 6 homolog from Drosophila melanogaster (Fruit fly).